We begin with the raw amino-acid sequence, 88 residues long: MVKISVSRFGSKHNPHYRIVVTDVRRKRDGAYIEKIGYYDPRKTTPDWLKVDVERARYWLSVGAQPTDTARRLLRQAGVFRQEAREGA.

Belongs to the bacterial ribosomal protein bS16 family.

This chain is Small ribosomal subunit protein bS16, found in Thermus aquaticus.